Here is a 144-residue protein sequence, read N- to C-terminus: Cysteine-rich tail protein 1 (144 aa).

The interval 51–105 (APEPTHLLQPTEVPGPKGAKGNQGAAPIQNQQAWQQPGNPYSSSQRQAGLTYAGP) is disordered. Over residues 78–98 (IQNQQAWQQPGNPYSSSQRQA) the composition is skewed to polar residues.

It belongs to the CYSRT1 family. As to quaternary structure, interacts with LCE1B; the interaction is direct. Interacts with LCE2C; the interaction is direct. Interacts with LCE3A; the interaction is direct. Interacts with LCE3C; the interaction is direct. Interacts with LCE4A; the interaction is direct. Interacts with LCE5A; the interaction is direct. Interacts with LCE1C. Interacts with LCE1D. Interacts with LCE1E. Interacts with LCE2A. Interacts with LCE3D. Interacts with LCE3E. Interacts with LCE1A. As to expression, expressed in the stratum granulosum, in skin and oral epithelia (at protein level).

The protein resides in the cornified envelope. Its function is as follows. Component of the stratum corneum that may contribute to epidermal antimicrobial host defenses. The protein is Cysteine-rich tail protein 1 (CYSRT1) of Homo sapiens (Human).